Here is a 91-residue protein sequence, read N- to C-terminus: Probable Fe(2+)-trafficking protein (91 aa).

This sequence belongs to the Fe(2+)-trafficking protein family.

In terms of biological role, could be a mediator in iron transactions between iron acquisition and iron-requiring processes, such as synthesis and/or repair of Fe-S clusters in biosynthetic enzymes. In Paraburkholderia phymatum (strain DSM 17167 / CIP 108236 / LMG 21445 / STM815) (Burkholderia phymatum), this protein is Probable Fe(2+)-trafficking protein.